The primary structure comprises 82 residues: Omega-ctenitoxin-Pn1a (82 aa).

Residues 1 to 21 (MWLKIQVFLLAITLITLGIQA) form the signal peptide. Residues 22 to 37 (EPNSSPNNPLIEEEAR) constitute a propeptide that is removed on maturation. 4 disulfides stabilise this stretch: cysteine 39–cysteine 54, cysteine 46–cysteine 59, cysteine 53–cysteine 70, and cysteine 61–cysteine 68. Positions 72-82 (KKFIEFFGGGK) are excised as a propeptide.

This sequence belongs to the neurotoxin 02 (plectoxin) family. In terms of tissue distribution, expressed by the venom gland.

It is found in the secreted. Functionally, antagonist of L-type calcium channels (Cav1/CACNA1). Induces immediate clockwise gyration and flaccid paralysis after 6 hours at dose levels of 5 ug per mouse. This chain is Omega-ctenitoxin-Pn1a, found in Phoneutria nigriventer (Brazilian armed spider).